The chain runs to 412 residues: Putative competence-damage inducible protein (412 aa).

The protein belongs to the CinA family.

The protein is Putative competence-damage inducible protein of Bacillus cereus (strain ATCC 14579 / DSM 31 / CCUG 7414 / JCM 2152 / NBRC 15305 / NCIMB 9373 / NCTC 2599 / NRRL B-3711).